A 690-amino-acid polypeptide reads, in one-letter code: Glycine--tRNA ligase beta subunit (690 aa).

It belongs to the class-II aminoacyl-tRNA synthetase family. Tetramer of two alpha and two beta subunits.

It localises to the cytoplasm. The catalysed reaction is tRNA(Gly) + glycine + ATP = glycyl-tRNA(Gly) + AMP + diphosphate. This Tolumonas auensis (strain DSM 9187 / NBRC 110442 / TA 4) protein is Glycine--tRNA ligase beta subunit.